The sequence spans 438 residues: Serine--tRNA ligase (438 aa).

245 to 247 (TSE) is an L-serine binding site. 276–278 (RSE) serves as a coordination point for ATP. Glu-299 serves as a coordination point for L-serine. 363–366 (EISS) provides a ligand contact to ATP. Position 398 (Ser-398) interacts with L-serine.

This sequence belongs to the class-II aminoacyl-tRNA synthetase family. Type-1 seryl-tRNA synthetase subfamily. In terms of assembly, homodimer. The tRNA molecule binds across the dimer.

The protein localises to the cytoplasm. It catalyses the reaction tRNA(Ser) + L-serine + ATP = L-seryl-tRNA(Ser) + AMP + diphosphate + H(+). The catalysed reaction is tRNA(Sec) + L-serine + ATP = L-seryl-tRNA(Sec) + AMP + diphosphate + H(+). Its pathway is aminoacyl-tRNA biosynthesis; selenocysteinyl-tRNA(Sec) biosynthesis; L-seryl-tRNA(Sec) from L-serine and tRNA(Sec): step 1/1. Functionally, catalyzes the attachment of serine to tRNA(Ser). Is also able to aminoacylate tRNA(Sec) with serine, to form the misacylated tRNA L-seryl-tRNA(Sec), which will be further converted into selenocysteinyl-tRNA(Sec). This chain is Serine--tRNA ligase, found in Verminephrobacter eiseniae (strain EF01-2).